The following is a 1174-amino-acid chain: MPAAVATGVQFGGPPKNKKIVFDDSGEAVVKQNKKEHPQRPKFEGKEQVKKPQKIKFGEDGKAKGAKSFNKNHQKPDFANKPQRIKFGDDGEQVASKSFNQNHKNGPKPQKIKFGEDREAVHQKPFNKNNHKHNGQKSDFANKPQKIKFTDDGEDEVTANSSNTKTEPTKKSQKIKFGDDGESKENFKKPQRIKFDEDGAGKNVSDSDGDSDEELGDSISKKHNKYQSKIDEDEESQKKWYHVHPDYPSTDEVLDMKENDQLELYNLCKNSFEAEKITFNKRNPSDARWLQTALHKGTAKDRANAGALLVTSNPLGNLEALSTLIGFCKISNKASNDVIAVLTDLWQEVLLPPNRKLLAVHTRGADWKKLKKDENLRNEQKRRIYAYWHFESELKDQYHEFLKNVMQGLQTGQEHNKNSSIVSAARLLAYAPEKEQLLLTMLVNKLGDPIAKIASKALHHLSEVAQKHPNMCGVIVAEAEKLLFRNNISERAQHFALCFLSSIAPSGRPEVCTKLVNICFALFKVLVQKGAVNNRTMQAILRCLQKAIVEAKPAKDSNGELLTKEMQDTIYRLVHLADIRVAVQTLGLLLQLVAVKTEKSDRFYNALYVKLLDLNLINVGSKTAAHLLHIVHRAIHIDNHVARAQAFVKRLLQLTLYAPPHIAAGCLIVIHKLLRMRRELIGGTGASEEVEEGSKVVLPISADLDKFGSDDEEVYEDVKDEADDTKDSNPLEEKADNDVKSSASSWHHARVAATEAKVRDIDSCKYDPYHRVPAFAGAAYALRHELLLLRQHYHPTVQVFAEQILQQSRIDYYGDPLRDFGLPHFLERFAFKNPKKLEASQAAENATVAHKRYMAHGARGRPVKSLTKANCTEDEMFIFNFLEHKRRQAEIVAQNKKQKEIKKDAAEEGDDGEAGEEYLKEGEVDDDEFEAYLDGYFGKKFKEGVDEEQDEEELNFLQELGGEIKKDKSKDKKKKKQSDKAEDEMDDIDDDWGDDDLAEDEDDEIEGEDQSDDETGSIDLQPLDDDDDDDDDDDDEGSISEGGPGDSDSSDAPESPDEEDDDDEDAPPRSKKSRKDSTDMVGGRSFAKTLKQSHDMSSLFAAADDFSSLLEETAKVKGQGTSNAVFNKDKSSDKQLKWEENRRSNSKSYKGKKFAGKPAAKGGRPQKAGKKRKH.

Disordered stretches follow at residues 1–20 (MPAA…NKKI), 29–237 (VVKQ…EESQ), 715–742 (YEDV…VKSS), 893–922 (AQNK…LKEG), 944–1085 (GVDE…GGRS), and 1116–1174 (VKGQ…KRKH). The span at 33-63 (NKKEHPQRPKFEGKEQVKKPQKIKFGEDGKA) shows a compositional bias: basic and acidic residues. Positions 95–104 (ASKSFNQNHK) are enriched in polar residues. Composition is skewed to basic and acidic residues over residues 113-122 (KFGEDREAVH) and 176-200 (KFGD…EDGA). 2 stretches are compositionally biased toward acidic residues: residues 207 to 216 (SDGDSDEELG) and 715 to 724 (YEDVKDEADD). Basic and acidic residues-rich tracts occupy residues 725–739 (TKDS…DNDV) and 897–906 (KQKEIKKDAA). 4 stretches are compositionally biased toward acidic residues: residues 907–916 (EEGDDGEAGE), 945–954 (VDEEQDEEEL), 981–1038 (AEDE…DEGS), and 1048–1065 (DSSD…DDED). The span at 1127–1143 (NKDKSSDKQLKWEENRR) shows a compositional bias: basic and acidic residues. The segment covering 1156 to 1166 (GKPAAKGGRPQ) has biased composition (low complexity).

It belongs to the CBF/MAK21 family.

The protein localises to the nucleus. It is found in the nucleolus. Its function is as follows. Involved in rRNA processing and ribosome maturation. May also act as a transcription factor. This is Nucleolar complex protein 1 from Drosophila melanogaster (Fruit fly).